The chain runs to 445 residues: MQENYKAKAYDILKNLNIEEGDLIEIKKGDLRIRGILLPSYSKDERIFVIKLDNGYNIGISIDNISEIKLITKNSSKAQESERKEVSRNGAKSEIKIISTGGTIVSKVEYETGAVRPALTTEEIVQFLPEINEIAKVDAEVLFSILSENMKPEYWVKIAESVKKAFDEGNTGVVIAHGTDTMAYTASALAFSLRSLQGPVVLVGSQRSSDRPSSDSAINLLSAVTTAKYAPFGEVVVNMHADSSDTYALVHRGVKVRKMHSSRRDAFQSVNDKPLAKVLWKERKLVMLDKSYMSKKGETTLDAKFDNRAFLLYYYPGLDRDFLEHILTNTKIRGLIIAGTGLGHTSSDYVELFRKATKDGIFIGMTTQCLFGRVNMNVYTTGRQLLDAGVTPLEDMLPEVALVKLMWVLAHEQDLEKIRSLMISNLVGEINPRHTLDLFPRWSYE.

Residues 93–425 enclose the Asparaginase/glutaminase domain; sequence SEIKIISTGG…EKIRSLMISN (333 aa). Residues threonine 103, threonine 179, aspartate 180, and lysine 258 contribute to the active site.

This sequence belongs to the asparaginase 1 family. GatD subfamily. In terms of assembly, heterodimer of GatD and GatE.

The catalysed reaction is L-glutamyl-tRNA(Gln) + L-glutamine + ATP + H2O = L-glutaminyl-tRNA(Gln) + L-glutamate + ADP + phosphate + H(+). Its function is as follows. Allows the formation of correctly charged Gln-tRNA(Gln) through the transamidation of misacylated Glu-tRNA(Gln) in organisms which lack glutaminyl-tRNA synthetase. The reaction takes place in the presence of glutamine and ATP through an activated gamma-phospho-Glu-tRNA(Gln). The GatDE system is specific for glutamate and does not act on aspartate. In Saccharolobus islandicus (strain Y.N.15.51 / Yellowstone #2) (Sulfolobus islandicus), this protein is Glutamyl-tRNA(Gln) amidotransferase subunit D.